Here is a 115-residue protein sequence, read N- to C-terminus: NADH-ubiquinone oxidoreductase chain 3 (115 aa).

The next 3 membrane-spanning stretches (helical) occupy residues 4 to 24 (LITMTVNSALSFCLISIAFWL), 55 to 75 (FFLVGITFLLFDLEIALLLPL), and 87 to 107 (TMMVSFMFVSILALGLAYEWL).

The protein belongs to the complex I subunit 3 family. Core subunit of respiratory chain NADH dehydrogenase (Complex I) which is composed of 45 different subunits. Interacts with TMEM186. Interacts with TMEM242.

It is found in the mitochondrion inner membrane. The catalysed reaction is a ubiquinone + NADH + 5 H(+)(in) = a ubiquinol + NAD(+) + 4 H(+)(out). Core subunit of the mitochondrial membrane respiratory chain NADH dehydrogenase (Complex I) which catalyzes electron transfer from NADH through the respiratory chain, using ubiquinone as an electron acceptor. Essential for the catalytic activity of complex I. This chain is NADH-ubiquinone oxidoreductase chain 3, found in Notiomys edwardsii (Edwards's long-clawed mouse).